Here is a 38-residue protein sequence, read N- to C-terminus: Large ribosomal subunit protein bL36 (38 aa).

It belongs to the bacterial ribosomal protein bL36 family.

This chain is Large ribosomal subunit protein bL36, found in Flavobacterium psychrophilum (strain ATCC 49511 / DSM 21280 / CIP 103535 / JIP02/86).